A 162-amino-acid polypeptide reads, in one-letter code: UPF0460 protein y4vQ (162 aa).

The protein belongs to the UPF0460 family.

The sequence is that of UPF0460 protein y4vQ from Sinorhizobium fredii (strain NBRC 101917 / NGR234).